Here is a 228-residue protein sequence, read N- to C-terminus: DNA mismatch repair protein MutH (228 aa).

The protein belongs to the MutH family.

The protein localises to the cytoplasm. Functionally, sequence-specific endonuclease that cleaves unmethylated GATC sequences. It is involved in DNA mismatch repair. This Serratia proteamaculans (strain 568) protein is DNA mismatch repair protein MutH.